The following is a 295-amino-acid chain: Sperm acrosome membrane-associated protein 1 (295 aa).

Positions 1-29 (MSPGGAGCSAGLLLTVGWLLLAGLQSTCG) are cleaved as a signal peptide. Topologically, residues 30–220 (INVTAVQDPS…SRPDTDAVLV (191 aa)) are extracellular. The segment at 39–71 (SLVSEGENEGEEEAENDSEVENEPQAEAEQDVS) is disordered. Residues 44–68 (GENEGEEEAENDSEVENEPQAEAEQ) are compositionally biased toward acidic residues. N-linked (GlcNAc...) asparagine glycosylation occurs at Asn-72. A helical transmembrane segment spans residues 221 to 241 (FVLTIGVIICIFVIFVLIFII). The Cytoplasmic segment spans residues 242–295 (VNWATVKDFWASKASTTEIQSELSSMKYKDSTSLDQSPTEIPGHEDDALSEWNE). Residue Ser-256 is modified to Phosphoserine. Positions 263–295 (ELSSMKYKDSTSLDQSPTEIPGHEDDALSEWNE) are disordered. Tyr-269 carries the phosphotyrosine modification. Phosphoserine occurs at positions 278 and 291.

As to quaternary structure, interacts with CYLC1; the interaction may be relevant for proper acrosome attachment to the nuclear envelope. In terms of processing, N-glycosylated. As to expression, detected in spermatozoa (at protein level).

It localises to the cytoplasmic vesicle. It is found in the secretory vesicle. Its subcellular location is the acrosome inner membrane. Plays a role in acrosome expansion and establishment of normal sperm morphology during spermatogenesis. Important for male fertility. The chain is Sperm acrosome membrane-associated protein 1 from Sus scrofa (Pig).